A 506-amino-acid polypeptide reads, in one-letter code: Ubiquitin carboxyl-terminal hydrolase 22 (506 aa).

The segment at 4 to 121 (AGCSHVNGFK…KEEQRKAWKL (118 aa)) adopts a UBP-type zinc-finger fold. Positions 6, 8, 46, 49, 59, 62, 67, 72, 76, 82, 95, and 98 each coordinate Zn(2+). The region spanning 159–501 (RGLINLGNTC…EGYLLFYHKQ (343 aa)) is the USP domain. Cys-168 serves as the catalytic Nucleophile. His-460 functions as the Proton acceptor in the catalytic mechanism.

The protein belongs to the peptidase C19 family. UBP8 subfamily. Component of some SAGA transcription coactivator-HAT complexes.

The protein localises to the nucleus. The enzyme catalyses Thiol-dependent hydrolysis of ester, thioester, amide, peptide and isopeptide bonds formed by the C-terminal Gly of ubiquitin (a 76-residue protein attached to proteins as an intracellular targeting signal).. Histone deubiquitinating component of the transcription regulatory histone acetylation (HAT) complex SAGA. Catalyzes the deubiquitination of both histones H2A and H2B, thereby acting as a coactivator. Recruited to specific gene promoters by activators, where it is required for transcription. The sequence is that of Ubiquitin carboxyl-terminal hydrolase 22 (usp22) from Danio rerio (Zebrafish).